The sequence spans 153 residues: Endoribonuclease YbeY (153 aa).

The Zn(2+) site is built by histidine 114, histidine 118, and histidine 124.

The protein belongs to the endoribonuclease YbeY family. The cofactor is Zn(2+).

It is found in the cytoplasm. Functionally, single strand-specific metallo-endoribonuclease involved in late-stage 70S ribosome quality control and in maturation of the 3' terminus of the 16S rRNA. The chain is Endoribonuclease YbeY from Shewanella baltica (strain OS155 / ATCC BAA-1091).